Here is an 809-residue protein sequence, read N- to C-terminus: F-BAR domain only protein 2 (809 aa).

Residues 3–250 form the F-BAR domain; it reads MAHFVENFWG…NMANTTIESL (248 aa). Residues 3 to 274 are mediates dimerization and binding to membranes enriched in Pi(4,5)-P2 and induces their tubulation; it reads MAHFVENFWG…PGLIEFEECD (272 aa). Residues 87–156 adopt a coiled-coil conformation; sequence HLDLVRKLQE…CVEQERLKKE (70 aa). Residue lysine 297 forms a Glycyl lysine isopeptide (Lys-Gly) (interchain with G-Cter in SUMO2) linkage. The disordered stretch occupies residues 301-352; the sequence is DAESVECPDADSLNIPDVDEEGFSIKPEANQNDTKENHFYSSSDSDSEDEEP. Position 312 is a phosphoserine (serine 312). A Phosphothreonine modification is found at threonine 385. 4 positions are modified to phosphoserine: serine 387, serine 394, serine 402, and serine 403. The segment covering 390-416 has biased composition (polar residues); sequence VSRHSPVQMNRNSSNEELTKSKPSSLP. Disordered stretches follow at residues 390–422 and 435–536; these read VSRH…KGTN and LESS…PVSL. Residues 435 to 456 are compositionally biased toward low complexity; the sequence is LESSSAPLTSSSSARPTTPLSL. Phosphoserine occurs at positions 487, 492, 495, 507, 509, 510, and 532. Residues 501–520 show a composition bias toward low complexity; that stretch reads PLARAESSSSISSSASLSAA. The interval 520–809 is mediates interaction with DAB2, EPS15, EPS15R and ITSN1; it reads ANTPTVGVSR…FATGRYLADC (290 aa). One can recognise an MHD domain in the interval 541–808; it reads TLPVAIALTE…RFATGRYLAD (268 aa).

It belongs to the FCHO family. As to quaternary structure, homodimer; disulfide-linked. May form homotetramer. Interacts with AP2A1. Interacts with EPS15, EPS15R, ITSN1 and ITSN2; recruit those scaffolding proteins which in turn may interact with the adaptor protein complex AP-2 at the plasma membrane. Interacts with DAB2 (via DPF motifs); mediates LDL receptor/LDLR endocytosis. In terms of processing, ubiquitinated. Mainly undergoes monoubiquitination but also polyubiquitination. In terms of tissue distribution, ubiquitously expressed (at protein level).

The protein localises to the membrane. Its subcellular location is the clathrin-coated pit. Functions in an early step of clathrin-mediated endocytosis. Has both a membrane binding/bending activity and the ability to recruit proteins essential to the formation of functional clathrin-coated pits. Has a lipid-binding activity with a preference for membranes enriched in phosphatidylserine and phosphoinositides (Pi(4,5) biphosphate) like the plasma membrane. Its membrane-bending activity might be important for the subsequent action of clathrin and adaptors in the formation of clathrin-coated vesicles. Involved in adaptor protein complex AP-2-dependent endocytosis of the transferrin receptor, it also functions in the AP-2-independent endocytosis of the LDL receptor. This chain is F-BAR domain only protein 2 (Fcho2), found in Mus musculus (Mouse).